The sequence spans 264 residues: tRNA (guanine-N(7)-)-methyltransferase (264 aa).

A disordered region spans residues 1 to 39 (MIHDDDPNAPGAPHDDATAAPASATRAAPAAGDDDDANP). The span at 18–31 (TAAPASATRAAPAA) shows a compositional bias: low complexity. Residues glutamate 94, glutamate 119, aspartate 146, and aspartate 169 each coordinate S-adenosyl-L-methionine. Residue aspartate 169 is part of the active site. Substrate is bound by residues lysine 173, aspartate 205, and 240-243 (TKFE).

It belongs to the class I-like SAM-binding methyltransferase superfamily. TrmB family.

The catalysed reaction is guanosine(46) in tRNA + S-adenosyl-L-methionine = N(7)-methylguanosine(46) in tRNA + S-adenosyl-L-homocysteine. It participates in tRNA modification; N(7)-methylguanine-tRNA biosynthesis. Functionally, catalyzes the formation of N(7)-methylguanine at position 46 (m7G46) in tRNA. The protein is tRNA (guanine-N(7)-)-methyltransferase of Burkholderia mallei (strain ATCC 23344).